A 347-amino-acid polypeptide reads, in one-letter code: NADH-ubiquinone oxidoreductase chain 2 (347 aa).

The next 11 helical transmembrane spans lie at 1–21 (MNPL…AIVM), 25–45 (HWLT…PMLM), 59–79 (YFLT…MNLT), 96–116 (IIMT…FWVP), 127–147 (CLIL…MISP), 149–169 (INLN…GWGG), 178–198 (IMAY…AYNP), 200–220 (MTML…MLLI), 247–267 (IMLS…WMII), 276–296 (IIMP…YMRL), and 325–345 (LLSP…MMSL).

It belongs to the complex I subunit 2 family. Core subunit of respiratory chain NADH dehydrogenase (Complex I) which is composed of 45 different subunits. Interacts with TMEM242.

It localises to the mitochondrion inner membrane. The catalysed reaction is a ubiquinone + NADH + 5 H(+)(in) = a ubiquinol + NAD(+) + 4 H(+)(out). In terms of biological role, core subunit of the mitochondrial membrane respiratory chain NADH dehydrogenase (Complex I) which catalyzes electron transfer from NADH through the respiratory chain, using ubiquinone as an electron acceptor. Essential for the catalytic activity and assembly of complex I. This is NADH-ubiquinone oxidoreductase chain 2 from Natalus stramineus (Mexican funnel-eared bat).